Consider the following 205-residue polypeptide: Protein phosphatase inhibitor 2 (205 aa).

The segment at 1–44 is disordered; the sequence is MAASTASHRPIKGILKNKTSTTSSMVASAEQPRGNVDEELSKKS. At A2 the chain carries N-acetylalanine. Required for binding PPP1CC regions lie at residues 12 to 17 and 43 to 55; these read KGILKN and KSQKWDEMNILAT. The span at 17–26 shows a compositional bias: polar residues; that stretch reads NKTSTTSSMV. A compositionally biased stretch (basic and acidic residues) spans 35–44; sequence NVDEELSKKS. S44 is subject to Phosphoserine; by ATM. T73 carries the post-translational modification Phosphothreonine; by GSK3. Residue S87 is modified to Phosphoserine. Phosphothreonine occurs at positions 89 and 92. A disordered region spans residues 111 to 142; that stretch reads EPKYRIQEQESSGEEDSDLSPEEREKKRQFEM. A phosphoserine mark is found at S121, S122, S127, and S130. Acidic residues predominate over residues 121–130; sequence SSGEEDSDLS. Residues 131–142 are compositionally biased toward basic and acidic residues; sequence PEEREKKRQFEM. Residues 147-150 form a required for binding PPP1CC catalytic center, displacing metal ions and inhibition of PPP1CC catalytic activity region; that stretch reads HYNE. The tract at residues 163-205 is disordered; that stretch reads KDLHDDDEDEEMLETADGESMNTEESNQGSTPSDQQQNKLRSS. Over residues 167-179 the composition is skewed to acidic residues; that stretch reads DDDEDEEMLETAD. Residues 182 to 205 show a composition bias toward polar residues; that stretch reads SMNTEESNQGSTPSDQQQNKLRSS.

The protein belongs to the protein phosphatase inhibitor 2 family. Heterodimer with PP1. In terms of processing, phosphorylation on Thr-73 by GSK3 activates PP1 by dissociating the PP1-PPP1R2 complex. Phosphorylation on Ser-44 by ATM activates PP1 by dissociating the PP1-PPP1R2 complex.

In terms of biological role, inhibitor of protein-phosphatase 1. This Homo sapiens (Human) protein is Protein phosphatase inhibitor 2 (PPP1R2).